The primary structure comprises 77 residues: Sec-independent protein translocase protein TatA (77 aa).

The chain crosses the membrane as a helical span at residues 1 to 21 (MGGLSIWHWLIVLLIVALVFG). Residues 40–77 (KDGMREGEAPADPQQLPRSGSVNVDAKDATRSSDSNKA) form a disordered region. Positions 64 to 77 (DAKDATRSSDSNKA) are enriched in basic and acidic residues.

The protein belongs to the TatA/E family. As to quaternary structure, the Tat system comprises two distinct complexes: a TatABC complex, containing multiple copies of TatA, TatB and TatC subunits, and a separate TatA complex, containing only TatA subunits. Substrates initially bind to the TatABC complex, which probably triggers association of the separate TatA complex to form the active translocon.

It localises to the cell inner membrane. Part of the twin-arginine translocation (Tat) system that transports large folded proteins containing a characteristic twin-arginine motif in their signal peptide across membranes. TatA could form the protein-conducting channel of the Tat system. The polypeptide is Sec-independent protein translocase protein TatA (Burkholderia thailandensis (strain ATCC 700388 / DSM 13276 / CCUG 48851 / CIP 106301 / E264)).